A 474-amino-acid chain; its full sequence is MGSRYPSHQLSNGLFVSGRPEQPKERAPTMSAVAMPYTGGDIKRSGELGKMFDIPADGTKSRKSGPIPGAPSRSGSFAGTAQSGPGAPMATGRMSGSLASAGSVSMKKTNSGPLSKHGEPLKKSSGPQSGGVTRQNSGSIPILPATGLITSGPITSGPLNSSGAPRKVSGPLDSSGLMKSHMPTVVHNQAVTTLGPEDDFSCLKSFPKPVLWLVVLIFIMGFLAGGFILGAVHNPILLVVVAILFTVVAALFIWNICWGRRGITDFIARYPDADLRTAKNGQHVKVTGVVTCGNVPLESSFHRVPRCVYTSTCLYEYRGWGSKPANSSHRHFTWGLRSSERHVVDFYISDFQSGLRALVKTGSGAKVTPLVDDSVVIDFKQGSEQVSPDFVRWLGKKNLTSDDRIMRLKEGYIKEGSTVSVIGVVQRNDNVLMIVPSSEPLAAGWQWRRCTFPTSLEGIVLRCEDSSNVDAIPV.

Positions 1-14 are enriched in polar residues; it reads MGSRYPSHQLSNGL. A disordered region spans residues 1 to 137; it reads MGSRYPSHQL…QSGGVTRQNS (137 aa). Position 45 is a phosphoserine (serine 45). Composition is skewed to polar residues over residues 73–83, 97–113, and 125–137; these read RSGSFAGTAQS, SLASAGSVSMKKTNSGP, and SGPQSGGVTRQNS. Serine 169 is modified (phosphoserine). 2 helical membrane-spanning segments follow: residues 210-230 and 236-256; these read VLWLVVLIFIMGFLAGGFILG and ILLVVVAILFTVVAALFIWNI.

The protein localises to the membrane. This is an uncharacterized protein from Arabidopsis thaliana (Mouse-ear cress).